The chain runs to 207 residues: 8-oxoguanine DNA glycosylase/AP lyase (207 aa).

Catalysis depends on residues Lys-129 and Asp-147.

This sequence belongs to the type-2 OGG1 family.

The catalysed reaction is 2'-deoxyribonucleotide-(2'-deoxyribose 5'-phosphate)-2'-deoxyribonucleotide-DNA = a 3'-end 2'-deoxyribonucleotide-(2,3-dehydro-2,3-deoxyribose 5'-phosphate)-DNA + a 5'-end 5'-phospho-2'-deoxyribonucleoside-DNA + H(+). Its function is as follows. Catalyzes the excision of an oxidatively damaged form of guanine (7,8-dihydro-8-oxoguanine = 8-oxoG) from DNA. Also cleaves the DNA backbone at apurinic/apyrimidinic sites (AP sites). Has little specificity for the base opposite oxoG. This Methanocaldococcus jannaschii (strain ATCC 43067 / DSM 2661 / JAL-1 / JCM 10045 / NBRC 100440) (Methanococcus jannaschii) protein is 8-oxoguanine DNA glycosylase/AP lyase.